A 173-amino-acid chain; its full sequence is MAASGELVPCSVYFCGSIRGGREDQALYSRIVSRLRRYGKVLTEHVADAELEPRGEEAAGGDQFIHERDLAWLRQADVVVAEVTQPSLGVGYELGRAVALGKPILCLFRPQSGRVLSAMIRGAADGSRFQVWDYAEEEVETMLHRYFEAYLPQGTASSSNPSACLNPTVLEKI.

Residue Ala2 is modified to N-acetylalanine. Position 16 (Gly16) interacts with 5-hydroxymethyl-dUMP. Position 17 is a phosphoserine (Ser17). 5-hydroxymethyl-dUMP is bound by residues Ile18, Arg19, Gly20, Ser87, Gly89, and Glu93. At Ser87 the chain carries Phosphoserine. 4 positions are modified to phosphoserine: Ser112, Ser117, Ser127, and Ser158. Ser117 is a binding site for 5-hydroxymethyl-dUMP.

It belongs to the 2'-deoxynucleoside 5'-phosphate N-hydrolase 1 family. Monomer and homodimer.

The protein resides in the cytoplasm. The protein localises to the nucleus. It carries out the reaction 5-hydroxymethyl-dUMP + H2O = 5-hydroxymethyluracil + 2-deoxy-D-ribose 5-phosphate. Part of a nucleotide salvage pathway that eliminates epigenetically modified 5-hydroxymethyl-dCMP (hmdCMP) in a two-step process entailing deamination to cytotoxic 5-hydroxymethyl-dUMP (hmdUMP), followed by its hydrolysis into 5-hydroxymethyluracil (hmU) and 2-deoxy-D-ribose 5-phosphate (deoxyribosephosphate). Catalyzes the second step in that pathway, the hydrolysis of the N-glycosidic bond in hmdUMP, degrading this cytotoxic nucleotide to avoid its genomic integration. The sequence is that of 5-hydroxymethyl-dUMP N-hydrolase from Mus musculus (Mouse).